Here is a 379-residue protein sequence, read N- to C-terminus: Anhydro-N-acetylmuramic acid kinase (379 aa).

An ATP-binding site is contributed by 12–19 (GTSLDGMD).

This sequence belongs to the anhydro-N-acetylmuramic acid kinase family.

It carries out the reaction 1,6-anhydro-N-acetyl-beta-muramate + ATP + H2O = N-acetyl-D-muramate 6-phosphate + ADP + H(+). It functions in the pathway amino-sugar metabolism; 1,6-anhydro-N-acetylmuramate degradation. Its pathway is cell wall biogenesis; peptidoglycan recycling. Its function is as follows. Catalyzes the specific phosphorylation of 1,6-anhydro-N-acetylmuramic acid (anhMurNAc) with the simultaneous cleavage of the 1,6-anhydro ring, generating MurNAc-6-P. Is required for the utilization of anhMurNAc either imported from the medium or derived from its own cell wall murein, and thus plays a role in cell wall recycling. This chain is Anhydro-N-acetylmuramic acid kinase, found in Gloeobacter violaceus (strain ATCC 29082 / PCC 7421).